Reading from the N-terminus, the 793-residue chain is MKVTPLMEQYLRIKEQYKDSILLFRLGDFYEAFFEDAKIVSKVLNIVLTRRQDAPMAGIPYHALNTYLKKLVEAGYKVAICDQMEEPSKSKKLIRREVTRVVTPGSIVEDEFLSETNNYMAVVSEEKGRYCTVFCDVSTGEVLVHESSDEQETLDLLKNYSISQIVCSEHLKSSLRERFPGVYTESISEWYFSDLEEVEKAYNLKDIHHFELSPLALKTLAALIKYVKYTMITEDLNLKPPLLISQRDYMILDSATVENLSLIPGDRGKNLFDVLNNTETPMGARLLKKWILHPLVDRKQIEERLEAVERLVNDRVSLEEMRNFLSNVRDVERIVSRVEYNRSVPRDLVALRETLEIIPKLNEILSNFGVFNKLAFPEELVDLLRRAIEDDPLGSPGEGKVIKRGFSPELDEYRDLLEHAEERLKEFEEKERERTGIQKLRVGYNQVFGYYIEVTKANLDKIPDDYERKQTLVNSERFITPELKEFETKIMAAKERIEEMEKELFKSVCEEVKKHKEVLLKLSEDLAKMDVLSTLAYDAILYNYTKPVFSEDRLEIKGGRHPVVERFTQNFVENDIYMDNEKRFVVITGPNMSGKSTFIRQVGLISLMAQIGSFVPAQKAILPVFDRIFTRMGARDDLAGGRSTFLVEMNEMALILLKSTEKSLVLLDEVGRGTSTQDGVSIAWAISEELIKRGCKVLFATHFTELTELEKHFPQVQNKTILVKEEGKNVIFTHKVVDGVADRSYGIEVAKIAGIPDRVINRAYEILERNFKNHTKKNGKSNRFSQQIPLFPV.

589-596 (GPNMSGKS) provides a ligand contact to ATP.

It belongs to the DNA mismatch repair MutS family.

In terms of biological role, this protein is involved in the repair of mismatches in DNA. It is possible that it carries out the mismatch recognition step. This protein has a weak ATPase activity. In Thermotoga sp. (strain RQ2), this protein is DNA mismatch repair protein MutS.